Here is a 405-residue protein sequence, read N- to C-terminus: L-rhamnonate dehydratase (405 aa).

Substrate contacts are provided by His33 and Arg59. 3 residues coordinate Mg(2+): Asp226, Glu252, and Glu280. The Proton acceptor role is filled by His329. Residue Glu349 coordinates substrate.

It belongs to the mandelate racemase/muconate lactonizing enzyme family. RhamD subfamily. Homooctamer; tetramer of dimers. Mg(2+) serves as cofactor.

The catalysed reaction is L-rhamnonate = 2-dehydro-3-deoxy-L-rhamnonate + H2O. Functionally, catalyzes the dehydration of L-rhamnonate to 2-keto-3-deoxy-L-rhamnonate (KDR). The chain is L-rhamnonate dehydratase from Escherichia coli O6:K15:H31 (strain 536 / UPEC).